The sequence spans 276 residues: Undecaprenyl-diphosphatase (276 aa).

6 helical membrane-spanning segments follow: residues 43 to 63 (RAMAFNIIIQLAAILAVVWEF), 85 to 105 (GNLLLAFMPAVVLGVLFADLI), 109 to 129 (LFNPITVATALVVGGVIMLWA), 183 to 203 (AATEFSFFLAMPTMVGAAVYS), 214 to 234 (ADLPVFAIGFVTSFIFAMIAV), and 249 to 269 (FAWYRIVFGLLILATWQFGWV).

It belongs to the UppP family.

The protein resides in the cell inner membrane. The catalysed reaction is di-trans,octa-cis-undecaprenyl diphosphate + H2O = di-trans,octa-cis-undecaprenyl phosphate + phosphate + H(+). Its function is as follows. Catalyzes the dephosphorylation of undecaprenyl diphosphate (UPP). Confers resistance to bacitracin. The sequence is that of Undecaprenyl-diphosphatase from Pseudomonas putida (strain GB-1).